Here is a 170-residue protein sequence, read N- to C-terminus: Adenine phosphoribosyltransferase (170 aa).

The protein belongs to the purine/pyrimidine phosphoribosyltransferase family. Homodimer.

Its subcellular location is the cytoplasm. It carries out the reaction AMP + diphosphate = 5-phospho-alpha-D-ribose 1-diphosphate + adenine. It functions in the pathway purine metabolism; AMP biosynthesis via salvage pathway; AMP from adenine: step 1/1. In terms of biological role, catalyzes a salvage reaction resulting in the formation of AMP, that is energically less costly than de novo synthesis. The sequence is that of Adenine phosphoribosyltransferase from Acholeplasma laidlawii (strain PG-8A).